A 337-amino-acid polypeptide reads, in one-letter code: 1-aminocyclopropane-1-carboxylate deaminase (337 aa).

At Lys50 the chain carries N6-(pyridoxal phosphate)lysine. Ser77 serves as the catalytic Nucleophile.

Belongs to the ACC deaminase/D-cysteine desulfhydrase family. In terms of assembly, homotrimer. It depends on pyridoxal 5'-phosphate as a cofactor.

The enzyme catalyses 1-aminocyclopropane-1-carboxylate + H2O = 2-oxobutanoate + NH4(+). In terms of biological role, catalyzes a cyclopropane ring-opening reaction, the irreversible conversion of 1-aminocyclopropane-1-carboxylate (ACC) to ammonia and alpha-ketobutyrate. Allows growth on ACC as a nitrogen source. The protein is 1-aminocyclopropane-1-carboxylate deaminase of Methylobacterium sp. (strain 4-46).